The chain runs to 308 residues: D-alanine--D-alanine ligase (308 aa).

The region spanning 105-302 (KAIFKALGLD…FPELCERILD (198 aa)) is the ATP-grasp domain. Residue 133–188 (DLPFGVPCVVKPAGEGSSVGVQIVKDAARLADACREAARYKGDVVVERYVKGTEVN) participates in ATP binding. D256, E269, and N271 together coordinate Mg(2+).

Belongs to the D-alanine--D-alanine ligase family. The cofactor is Mg(2+). Mn(2+) serves as cofactor.

The protein resides in the cytoplasm. The enzyme catalyses 2 D-alanine + ATP = D-alanyl-D-alanine + ADP + phosphate + H(+). Its pathway is cell wall biogenesis; peptidoglycan biosynthesis. Cell wall formation. In Anaeromyxobacter sp. (strain Fw109-5), this protein is D-alanine--D-alanine ligase.